The following is an 80-amino-acid chain: Protein pegasus (80 aa).

An N-terminal signal peptide occupies residues 1–22; it reads MKLSAVLLAIALLALSLVQCLG. The Kazal-like domain occupies 24–80; sequence PDPSTKCVMECDTQEYRSICAADDKGSTKTYRNLCVMKTENCLQNANFQKISDKECP. 3 disulfides stabilise this stretch: cysteine 30–cysteine 65, cysteine 34–cysteine 58, and cysteine 43–cysteine 79.

Interacts with wg; the interaction facilitates short-range diffusion of wg. In terms of tissue distribution, strongly expressed in the developing fly wing but is excluded from the presumptive wing margin.

The protein localises to the secreted. Its function is as follows. Increases short-range diffusion of the wingless/wg protein, enhancing its signaling and expression of target genes required for wing margin morphogenesis. May act as a serine protease inhibitor since it possess the Kazal serine protease inhibitor signature. This chain is Protein pegasus, found in Drosophila melanogaster (Fruit fly).